A 121-amino-acid polypeptide reads, in one-letter code: Non-structural protein 8 (121 aa).

Residues 1-15 form the signal peptide; that stretch reads MKLLIVFGLLTSVYC. One can recognise an SARS ORF8 Ig-like domain in the interval 19-121; the sequence is ECSIQECCEN…HDVRVVLDFV (103 aa). Intrachain disulfides connect Cys-25–Cys-90, Cys-37–Cys-102, and Cys-61–Cys-83.

The polypeptide is Non-structural protein 8 (Bat coronavirus Rp3/2004 (BtCoV/Rp3/2004)).